A 40-amino-acid polypeptide reads, in one-letter code: Lucifensin (40 aa).

Intrachain disulfides connect C3–C30, C16–C36, and C20–C38.

This sequence belongs to the invertebrate defensin family. Type 1 subfamily. The disulfide bonds are essential for antimicrobial activity. In terms of tissue distribution, larval fat body, hemolymph and salivary glands (at protein level).

Its subcellular location is the secreted. Functionally, shows strong antibacterial activity against the Gram-positive bacterium M.luteus. Also shows antibacterial activity against the Gram-positive bacteria E.fecalis, S.aureus, S.carnosus, S.pneumoniae and S.pyogenes and against a number of methicillin-resistant S.aureus and glycopeptide-intermediate S.aureus isolates. Does not show antibacterial activity against Gram-negative bacteria or antifungal activity against C.utilis. Shows slight antifungal activity against C.albicans. The chain is Lucifensin from Lucilia cuprina (Green bottle fly).